A 355-amino-acid chain; its full sequence is Chorismate synthase (355 aa).

R48 contacts NADP(+). Residues 125 to 127 (RSS), 238 to 239 (NA), G278, 293 to 297 (KPASS), and R319 each bind FMN.

The protein belongs to the chorismate synthase family. Homotetramer. FMNH2 is required as a cofactor.

The catalysed reaction is 5-O-(1-carboxyvinyl)-3-phosphoshikimate = chorismate + phosphate. The protein operates within metabolic intermediate biosynthesis; chorismate biosynthesis; chorismate from D-erythrose 4-phosphate and phosphoenolpyruvate: step 7/7. Catalyzes the anti-1,4-elimination of the C-3 phosphate and the C-6 proR hydrogen from 5-enolpyruvylshikimate-3-phosphate (EPSP) to yield chorismate, which is the branch point compound that serves as the starting substrate for the three terminal pathways of aromatic amino acid biosynthesis. This reaction introduces a second double bond into the aromatic ring system. This Baumannia cicadellinicola subsp. Homalodisca coagulata protein is Chorismate synthase.